The chain runs to 594 residues: Adenine deaminase 1 (594 aa).

The protein belongs to the metallo-dependent hydrolases superfamily. Adenine deaminase family. The cofactor is Mn(2+).

The enzyme catalyses adenine + H2O + H(+) = hypoxanthine + NH4(+). The sequence is that of Adenine deaminase 1 from Latilactobacillus sakei subsp. sakei (strain 23K) (Lactobacillus sakei subsp. sakei).